We begin with the raw amino-acid sequence, 376 residues long: Ribonucleoside-diphosphate reductase 1 subunit beta (376 aa).

The Fe cation site is built by Asp-85, Glu-116, and His-119. Tyr-123 is an active-site residue. Residues Glu-205, Glu-239, and His-242 each coordinate Fe cation.

Belongs to the ribonucleoside diphosphate reductase small chain family. In terms of assembly, tetramer of two alpha (R1) and two beta (R2) subunits. The B1 protein is a dimer of alpha subunits. A radical transfer pathway occurs between Tyr-123 of R2 and R1. Fe cation is required as a cofactor.

The catalysed reaction is a 2'-deoxyribonucleoside 5'-diphosphate + [thioredoxin]-disulfide + H2O = a ribonucleoside 5'-diphosphate + [thioredoxin]-dithiol. Provides the precursors necessary for DNA synthesis. Catalyzes the biosynthesis of deoxyribonucleotides from the corresponding ribonucleotides. R2 contains the tyrosyl radical required for catalysis. The polypeptide is Ribonucleoside-diphosphate reductase 1 subunit beta (nrdB) (Salmonella typhimurium (strain LT2 / SGSC1412 / ATCC 700720)).